Here is a 669-residue protein sequence, read N- to C-terminus: UvrABC system protein C (669 aa).

The GIY-YIG domain maps to 14–91; that stretch reads DSPGCYLHKD…IQRYKPKYNI (78 aa). One can recognise a UVR domain in the interval 196–231; sequence KKIVKELEGKMISASDNMEFEQAAEYRDVIKAIGTL. Residues 647–669 are disordered; the sequence is PHKSDENWESIKDNVPLLKSEKS. The segment covering 648–658 has biased composition (basic and acidic residues); the sequence is HKSDENWESIK.

The protein belongs to the UvrC family. In terms of assembly, interacts with UvrB in an incision complex.

Its subcellular location is the cytoplasm. Its function is as follows. The UvrABC repair system catalyzes the recognition and processing of DNA lesions. UvrC both incises the 5' and 3' sides of the lesion. The N-terminal half is responsible for the 3' incision and the C-terminal half is responsible for the 5' incision. The protein is UvrABC system protein C of Lactococcus lactis subsp. cremoris (strain MG1363).